We begin with the raw amino-acid sequence, 377 residues long: Carboxynorspermidine/carboxyspermidine decarboxylase (377 aa).

An N6-(pyridoxal phosphate)lysine modification is found at Lys-41. Glu-238 and Asp-274 together coordinate substrate.

This sequence belongs to the Orn/Lys/Arg decarboxylase class-II family. NspC subfamily. Homodimer. Pyridoxal 5'-phosphate serves as cofactor.

The protein resides in the cytoplasm. The catalysed reaction is carboxynorspermidine + H(+) = norspermidine + CO2. It carries out the reaction carboxyspermidine + H(+) = spermidine + CO2. Functionally, catalyzes the decarboxylation of carboxynorspermidine and carboxyspermidine. Carboxynorspermidine is decarboxylated 20-fold more efficiently than carboxyspermidine. Exhibits some activity with L-ornithine, but shows no activity with L-arginine, L-lysine or meso-diaminopimelate. This is Carboxynorspermidine/carboxyspermidine decarboxylase from Vibrio vulnificus (strain CMCP6).